A 44-amino-acid polypeptide reads, in one-letter code: Endochitinase 1 (44 aa).

The protein belongs to the glycosyl hydrolase 19 family. Chitinase class I subfamily.

It carries out the reaction Random endo-hydrolysis of N-acetyl-beta-D-glucosaminide (1-&gt;4)-beta-linkages in chitin and chitodextrins.. Defense against chitin-containing fungal pathogens. The chain is Endochitinase 1 from Capsicum chinense (Scotch bonnet).